We begin with the raw amino-acid sequence, 1800 residues long: U3 small nucleolar RNA-associated protein 10 (1800 aa).

HEAT repeat units lie at residues 426 to 467 (FTQS…TTPA) and 581 to 619 (DVDL…LYKK). 2 helical membrane-spanning segments follow: residues 944–964 (IQSG…AIVN) and 1000–1020 (ALLL…HSVM). HEAT repeat units follow at residues 1043–1081 (DQTI…AFEH), 1250–1288 (TLSL…QNPE), 1294–1333 (QHRM…KYGR), and 1755–1793 (LALL…VLGE).

This sequence belongs to the HEATR1/UTP10 family. As to quaternary structure, component of the ribosomal small subunit (SSU) processome.

The protein resides in the nucleus. The protein localises to the nucleolus. It localises to the membrane. Its function is as follows. Involved in nucleolar processing of pre-18S ribosomal RNA. Involved in ribosome biosynthesis. This Aspergillus niger (strain ATCC MYA-4892 / CBS 513.88 / FGSC A1513) protein is U3 small nucleolar RNA-associated protein 10.